Reading from the N-terminus, the 689-residue chain is Glycine--tRNA ligase beta subunit (689 aa).

It belongs to the class-II aminoacyl-tRNA synthetase family. In terms of assembly, tetramer of two alpha and two beta subunits.

Its subcellular location is the cytoplasm. It carries out the reaction tRNA(Gly) + glycine + ATP = glycyl-tRNA(Gly) + AMP + diphosphate. The polypeptide is Glycine--tRNA ligase beta subunit (Enterobacter sp. (strain 638)).